Here is a 180-residue protein sequence, read N- to C-terminus: NADH-quinone oxidoreductase subunit I (180 aa).

2 consecutive 4Fe-4S ferredoxin-type domains span residues 50–80 (LTRD…LQKA) and 90–119 (EFFR…LTPD). Cys60, Cys63, Cys66, Cys70, Cys99, Cys102, Cys105, and Cys109 together coordinate [4Fe-4S] cluster.

This sequence belongs to the complex I 23 kDa subunit family. In terms of assembly, NDH-1 is composed of 13 different subunits. Subunits NuoA, H, J, K, L, M, N constitute the membrane sector of the complex. It depends on [4Fe-4S] cluster as a cofactor.

It is found in the cell inner membrane. It catalyses the reaction a quinone + NADH + 5 H(+)(in) = a quinol + NAD(+) + 4 H(+)(out). In terms of biological role, NDH-1 shuttles electrons from NADH, via FMN and iron-sulfur (Fe-S) centers, to quinones in the respiratory chain. The immediate electron acceptor for the enzyme in this species is believed to be ubiquinone. Couples the redox reaction to proton translocation (for every two electrons transferred, four hydrogen ions are translocated across the cytoplasmic membrane), and thus conserves the redox energy in a proton gradient. The polypeptide is NADH-quinone oxidoreductase subunit I (Pectobacterium atrosepticum (strain SCRI 1043 / ATCC BAA-672) (Erwinia carotovora subsp. atroseptica)).